Reading from the N-terminus, the 265-residue chain is Chlorophyll a-b binding protein 1C, chloroplastic (265 aa).

Residues Met1–Thr34 constitute a chloroplast transit peptide. A helical transmembrane segment spans residues Leu151 to Val171. Residues Val152, Ser156, Gln164, Glu172, Arg175, and Leu181 each contribute to the chlorophyll b site. Residues Lys212, Glu213, Asn216, Arg218, Gln230, His245, and Ala254 each coordinate chlorophyll a. A helical membrane pass occupies residues Leu219–Leu239. Residue Phe261 coordinates chlorophyll b.

This sequence belongs to the light-harvesting chlorophyll a/b-binding (LHC) protein family. As to quaternary structure, the LHC complex consists of chlorophyll a-b binding proteins. The cofactor is Binds at least 14 chlorophylls (8 Chl-a and 6 Chl-b) and carotenoids such as lutein and neoxanthin.. Photoregulated by reversible phosphorylation of its threonine residues.

It localises to the plastid. It is found in the chloroplast thylakoid membrane. In terms of biological role, the light-harvesting complex (LHC) functions as a light receptor, it captures and delivers excitation energy to photosystems with which it is closely associated. The chain is Chlorophyll a-b binding protein 1C, chloroplastic (CAB1C) from Solanum lycopersicum (Tomato).